Here is a 281-residue protein sequence, read N- to C-terminus: NADPH-dependent 7-cyano-7-deazaguanine reductase (281 aa).

86–88 provides a ligand contact to substrate; it reads IES. 88–89 lines the NADPH pocket; it reads SK. Cysteine 189 serves as the catalytic Thioimide intermediate. The active-site Proton donor is aspartate 196. 228 to 229 lines the substrate pocket; sequence HE. 257 to 258 lines the NADPH pocket; the sequence is RG.

Belongs to the GTP cyclohydrolase I family. QueF type 2 subfamily. In terms of assembly, homodimer.

The protein resides in the cytoplasm. It catalyses the reaction 7-aminomethyl-7-carbaguanine + 2 NADP(+) = 7-cyano-7-deazaguanine + 2 NADPH + 3 H(+). Its pathway is tRNA modification; tRNA-queuosine biosynthesis. Its function is as follows. Catalyzes the NADPH-dependent reduction of 7-cyano-7-deazaguanine (preQ0) to 7-aminomethyl-7-deazaguanine (preQ1). The protein is NADPH-dependent 7-cyano-7-deazaguanine reductase of Mannheimia succiniciproducens (strain KCTC 0769BP / MBEL55E).